An 877-amino-acid polypeptide reads, in one-letter code: DNA polymerase I (877 aa).

In terms of domain architecture, 5'-3' exonuclease spans T177–D270. The 3'-5' exonuclease domain occupies D302–S465.

Belongs to the DNA polymerase type-A family. As to quaternary structure, single-chain monomer with multiple functions.

The catalysed reaction is DNA(n) + a 2'-deoxyribonucleoside 5'-triphosphate = DNA(n+1) + diphosphate. Functionally, in addition to polymerase activity, this DNA polymerase exhibits 3'-5' and 5'-3' exonuclease activity. This Streptococcus pneumoniae serotype 4 (strain ATCC BAA-334 / TIGR4) protein is DNA polymerase I (polA).